We begin with the raw amino-acid sequence, 293 residues long: tRNA pseudouridine synthase B (293 aa).

Residue aspartate 38 is the Nucleophile of the active site.

This sequence belongs to the pseudouridine synthase TruB family. Type 1 subfamily.

It catalyses the reaction uridine(55) in tRNA = pseudouridine(55) in tRNA. Its function is as follows. Responsible for synthesis of pseudouridine from uracil-55 in the psi GC loop of transfer RNAs. The polypeptide is tRNA pseudouridine synthase B (Nostoc sp. (strain PCC 7120 / SAG 25.82 / UTEX 2576)).